The following is a 967-amino-acid chain: Probable serine/threonine-protein kinase DDB_G0290621 (967 aa).

Disordered stretches follow at residues 65–122, 215–251, and 287–326; these read EDSD…KEKE, SSLS…SSSS, and QQQL…SPRT. Positions 66–94 are enriched in acidic residues; that stretch reads DSDEDDDDEEDEEDEEDSDEEEDDDVVED. Residues 95-122 are compositionally biased toward basic and acidic residues; sequence DNTKDIGKSRDSDKSIKGKEKGKEKEKE. Low complexity predominate over residues 297–326; it reads QQQQQQQQQQQQQNNSMLQQSNNNNISPRT. The 266-residue stretch at 345–610 folds into the Protein kinase domain; sequence FNDSNKIGEG…EIRSRLSEII (266 aa). ATP-binding positions include 351-359 and Lys368; that span reads IGEGGQCSI. The active-site Proton acceptor is Asp467. 3 disordered regions span residues 634-667, 700-752, and 862-882; these read DDSL…NNNN, STSN…NNNI, and TSSS…NPSN. Over residues 639 to 666 the composition is skewed to low complexity; that stretch reads NNNNNNNQNNNNQNNNNNNNNNNNNNNN. Residues 863-882 show a composition bias toward low complexity; that stretch reads SSSSNKNNNNNNNDNNNPSN.

Belongs to the protein kinase superfamily. TKL Ser/Thr protein kinase family.

It catalyses the reaction L-seryl-[protein] + ATP = O-phospho-L-seryl-[protein] + ADP + H(+). The catalysed reaction is L-threonyl-[protein] + ATP = O-phospho-L-threonyl-[protein] + ADP + H(+). The chain is Probable serine/threonine-protein kinase DDB_G0290621 from Dictyostelium discoideum (Social amoeba).